The chain runs to 128 residues: Otoraplin (128 aa).

An N-terminal signal peptide occupies residues 1-18; the sequence is MARILILLLGGLVVLCAG. Intrachain disulfides connect C32–C37 and C55–C127. The region spanning 39–110 is the SH3 domain; it reads YTISLARAQE…PSNLVKEQRV (72 aa).

The protein belongs to the MIA/OTOR family. Highly expressed in cochlea.

The protein resides in the secreted. The sequence is that of Otoraplin (Otor) from Mus musculus (Mouse).